We begin with the raw amino-acid sequence, 336 residues long: Protein SGT1 homolog (336 aa).

Position 2 is an N-acetylalanine (Ala-2). TPR repeat units lie at residues 11-44 (SQRL…NPDD), 45-78 (AQYY…NPNN), and 79-112 (CTAL…DSTD). The 90-residue stretch at 140 to 229 (QSKIKYDWYQ…PEAVRWEKLE (90 aa)) folds into the CS domain. Thr-236 is subject to Phosphothreonine. The 90-residue stretch at 247–336 (MYPSSSHYTR…PPDDMEWKQY (90 aa)) folds into the SGS domain. Ser-252 is subject to Phosphoserine. Position 255 is a phosphothreonine (Thr-255). Lys-266 participates in a covalent cross-link: Glycyl lysine isopeptide (Lys-Gly) (interchain with G-Cter in SUMO1); alternate. Lys-266 participates in a covalent cross-link: Glycyl lysine isopeptide (Lys-Gly) (interchain with G-Cter in SUMO2); alternate. At Ser-302 the chain carries Phosphoserine.

The protein belongs to the SGT1 family. Probably associates with SCF (SKP1-CUL1-F-box protein) complex through interaction with SKP1. Interacts with S100A6. Interacts with HSP90. Post-translationally, phosphorylated at Ser-252 and Ser-302, dephosphorylation promotes nuclear translocation, most likely due to disruption of the SUGT1-HSP90 complex.

The protein localises to the cytoplasm. It is found in the nucleus. Its function is as follows. May play a role in ubiquitination and subsequent proteasomal degradation of target proteins. The sequence is that of Protein SGT1 homolog from Mus musculus (Mouse).